An 89-amino-acid polypeptide reads, in one-letter code: Small ribosomal subunit protein uS15 (89 aa).

The protein belongs to the universal ribosomal protein uS15 family. Part of the 30S ribosomal subunit. Forms a bridge to the 50S subunit in the 70S ribosome, contacting the 23S rRNA.

In terms of biological role, one of the primary rRNA binding proteins, it binds directly to 16S rRNA where it helps nucleate assembly of the platform of the 30S subunit by binding and bridging several RNA helices of the 16S rRNA. Its function is as follows. Forms an intersubunit bridge (bridge B4) with the 23S rRNA of the 50S subunit in the ribosome. This chain is Small ribosomal subunit protein uS15, found in Kineococcus radiotolerans (strain ATCC BAA-149 / DSM 14245 / SRS30216).